Here is a 419-residue protein sequence, read N- to C-terminus: CinA-like protein (419 aa).

The protein belongs to the CinA family.

This is CinA-like protein from Synechococcus sp. (strain CC9902).